A 209-amino-acid polypeptide reads, in one-letter code: Uracil phosphoribosyltransferase (209 aa).

Residues R79, R104, and 131-139 (DPMLATGGS) contribute to the 5-phospho-alpha-D-ribose 1-diphosphate site. Uracil-binding positions include I194 and 199-201 (GDA). D200 is a 5-phospho-alpha-D-ribose 1-diphosphate binding site.

The protein belongs to the UPRTase family. It depends on Mg(2+) as a cofactor.

It carries out the reaction UMP + diphosphate = 5-phospho-alpha-D-ribose 1-diphosphate + uracil. It functions in the pathway pyrimidine metabolism; UMP biosynthesis via salvage pathway; UMP from uracil: step 1/1. Its activity is regulated as follows. Allosterically activated by GTP. Its function is as follows. Catalyzes the conversion of uracil and 5-phospho-alpha-D-ribose 1-diphosphate (PRPP) to UMP and diphosphate. This is Uracil phosphoribosyltransferase from Alkaliphilus oremlandii (strain OhILAs) (Clostridium oremlandii (strain OhILAs)).